We begin with the raw amino-acid sequence, 151 residues long: Transcriptional regulator MraZ (151 aa).

SpoVT-AbrB domains are found at residues 5–52 (ANAI…PLSE) and 81–124 (AVDL…DEDA).

This sequence belongs to the MraZ family. As to quaternary structure, forms oligomers.

It is found in the cytoplasm. Its subcellular location is the nucleoid. The sequence is that of Transcriptional regulator MraZ from Pseudomonas syringae pv. syringae (strain B728a).